Here is a 309-residue protein sequence, read N- to C-terminus: Porphobilinogen deaminase (309 aa).

Residue cysteine 241 is modified to S-(dipyrrolylmethanemethyl)cysteine.

It belongs to the HMBS family. In terms of assembly, monomer. Dipyrromethane is required as a cofactor.

The catalysed reaction is 4 porphobilinogen + H2O = hydroxymethylbilane + 4 NH4(+). Its pathway is porphyrin-containing compound metabolism; protoporphyrin-IX biosynthesis; coproporphyrinogen-III from 5-aminolevulinate: step 2/4. Functionally, tetrapolymerization of the monopyrrole PBG into the hydroxymethylbilane pre-uroporphyrinogen in several discrete steps. The chain is Porphobilinogen deaminase from Bacillus cereus (strain ATCC 10987 / NRS 248).